The following is a 355-amino-acid chain: Probable butyrate kinase (355 aa).

Belongs to the acetokinase family.

It is found in the cytoplasm. It catalyses the reaction butanoate + ATP = butanoyl phosphate + ADP. The polypeptide is Probable butyrate kinase (Listeria welshimeri serovar 6b (strain ATCC 35897 / DSM 20650 / CCUG 15529 / CIP 8149 / NCTC 11857 / SLCC 5334 / V8)).